Reading from the N-terminus, the 888-residue chain is E3 ubiquitin-protein ligase SH3RF1 (888 aa).

The RING-type zinc finger occupies 12–53; the sequence is CPVCLERLDASAKVLPCQHTFCKRCLLGIVGSRNELRCPECR. The segment covering 108-127 has biased composition (polar residues); sequence SSKDLQSSQGGQQPRVQSWS. The disordered stretch occupies residues 108-128; that stretch reads SSKDLQSSQGGQQPRVQSWSP. 2 SH3 domains span residues 134 to 193 and 196 to 259; these read PQLP…IIKP and QPPP…FNSA. The interval 275–321 is disordered; it reads DAGECSSAAAQSSTAPKHSDTKKNTKKRHSFTSLTMANKSSQASQNR. The tract at residues 292–362 is interaction with RAC1; the sequence is HSDTKKNTKK…APSQVHISTT (71 aa). S304 carries the phosphoserine modification. The segment covering 305–321 has biased composition (polar residues); it reads FTSLTMANKSSQASQNR. The interval 440-543 is interaction with AKT2; the sequence is HLRPQTRPSV…STAGGPAQKL (104 aa). The SH3 3 domain maps to 445 to 506; the sequence is TRPSVYVAIY…PGNYVAPVTR (62 aa). Disordered regions lie at residues 516-548, 620-639, and 684-741; these read VPMSTAGQTSRGVTMVSPSTAGGPAQKLQGNGV, SVGLSHHSLASPQPAPLMPG, and TVLP…ASPT. Over residues 520-535 the composition is skewed to polar residues; sequence TAGQTSRGVTMVSPST. Phosphoserine is present on S532. The segment covering 692 to 704 has biased composition (polar residues); it reads SPDSASSACGNSS. Residues 707–718 show a composition bias toward basic and acidic residues; the sequence is KPDKDSKKEKKG. S735 carries the post-translational modification Phosphoserine. The SH3 4 domain maps to 829–888; that stretch reads VVCERHRVVVSYPPQSEAELELKEGDIVFVHKKREDGWFKGTLQRNGKTGLFPGSFVENI.

Belongs to the SH3RF family. As to quaternary structure, interacts with RAC1; in a GTP-dependent manner. Interacts with MAP3K10/MLK2 and MAP3K11/MLK3. Interacts with MAPK8IP; this interaction leads to the PJAC complex (POSH-JIP or SH3RF1/MAPK8IP apoptotic complex) with a 1:1 ratio. Interacts with SIAH1. Interacts with HERP1. Probably part of a signaling complex that may contain SH3RF1, MAPK8IP, DLK1, MAP2K4/MKK4, MAP2K7/MKK7, MAPK8/JNK1, MAPK9/JNK2, AKT1 and AKT2. Found in a complex with RAC2, MAP3K7/TAK1, MAP2K7/MKK7, MAPK8IP1/JIP1, MAPK8/JNK1 and MAPK9/JNK2. Found in a complex with RAC1, MAP3K11/MLK3, MAP2K7/MKK7, MAPK8IP1/JIP1 and MAPK8/JNK1. Interacts with SH3RF2. In terms of processing, phosphorylated at Ser-304 by AKT1 and AKT2. When phosphorylated, it has reduced ability to bind Rac. Post-translationally, autoubiquitinated. Ubiquitinated by SH3RF2, leading to proteasome-mediated degradation.

It is found in the cytoplasm. The protein localises to the perinuclear region. The protein resides in the cell projection. It localises to the lamellipodium. Its subcellular location is the golgi apparatus. It is found in the trans-Golgi network. The catalysed reaction is S-ubiquitinyl-[E2 ubiquitin-conjugating enzyme]-L-cysteine + [acceptor protein]-L-lysine = [E2 ubiquitin-conjugating enzyme]-L-cysteine + N(6)-ubiquitinyl-[acceptor protein]-L-lysine.. It functions in the pathway protein modification; protein ubiquitination. Has E3 ubiquitin-protein ligase activity. In the absence of an external substrate, it can catalyze self-ubiquitination. Stimulates ubiquitination of potassium channel KCNJ1, enhancing it's dynamin-dependent and clathrin-independent endocytosis. Acts as a scaffold protein that coordinates with MAPK8IP1/JIP1 in organizing different components of the JNK pathway, including RAC1 or RAC2, MAP3K11/MLK3 or MAP3K7/TAK1, MAP2K7/MKK7, MAPK8/JNK1 and/or MAPK9/JNK2 into a functional multiprotein complex to ensure the effective activation of the JNK signaling pathway. Regulates the differentiation of CD4(+) and CD8(+) T-cells and promotes T-helper 1 (Th1) cell differentiation. Regulates the activation of MAPK8/JNK1 and MAPK9/JNK2 in CD4(+) T-cells and the activation of MAPK8/JNK1 in CD8(+) T-cells. Plays a crucial role in the migration of neocortical neurons in the developing brain. Controls proper cortical neuronal migration and the formation of proximal cytoplasmic dilation in the leading process (PCDLP) in migratory neocortical neurons by regulating the proper localization of activated RAC1 and F-actin assembly. Functionally, (Microbial infection) Plays an essential role in the targeting of HIV-1 Gag to the plasma membrane, this function is dependent on it's RING domain, and hence it's E3 ligase activity. The polypeptide is E3 ubiquitin-protein ligase SH3RF1 (SH3RF1) (Homo sapiens (Human)).